The sequence spans 60 residues: Large ribosomal subunit protein bL32 (60 aa).

It belongs to the bacterial ribosomal protein bL32 family.

This chain is Large ribosomal subunit protein bL32, found in Latilactobacillus sakei subsp. sakei (strain 23K) (Lactobacillus sakei subsp. sakei).